The chain runs to 378 residues: Cytochrome b (378 aa).

4 helical membrane passes run phenylalanine 33 to methionine 53, tryptophan 77 to threonine 98, tryptophan 113 to leucine 133, and phenylalanine 178 to leucine 198. Heme b contacts are provided by histidine 83 and histidine 97. Heme b contacts are provided by histidine 182 and histidine 196. Residue histidine 201 coordinates a ubiquinone. 4 consecutive transmembrane segments (helical) span residues threonine 226 to threonine 246, leucine 288 to histidine 308, isoleucine 320 to glycine 340, and phenylalanine 347 to proline 366.

It belongs to the cytochrome b family. As to quaternary structure, the cytochrome bc1 complex contains 11 subunits: 3 respiratory subunits (MT-CYB, CYC1 and UQCRFS1), 2 core proteins (UQCRC1 and UQCRC2) and 6 low-molecular weight proteins (UQCRH/QCR6, UQCRB/QCR7, UQCRQ/QCR8, UQCR10/QCR9, UQCR11/QCR10 and a cleavage product of UQCRFS1). This cytochrome bc1 complex then forms a dimer. Requires heme b as cofactor.

Its subcellular location is the mitochondrion inner membrane. Component of the ubiquinol-cytochrome c reductase complex (complex III or cytochrome b-c1 complex) that is part of the mitochondrial respiratory chain. The b-c1 complex mediates electron transfer from ubiquinol to cytochrome c. Contributes to the generation of a proton gradient across the mitochondrial membrane that is then used for ATP synthesis. This Cebus albifrons (White-fronted capuchin) protein is Cytochrome b (MT-CYB).